The following is a 75-amino-acid chain: ASTSNYCNQMMKSRNLTQNRCKPVNTFVHESLADVQAVCSQKNVACKNGQTNCYQSYSTMSITDCRETGSSKYPN.

Cystine bridges form between cysteine 7–cysteine 65 and cysteine 46–cysteine 53. Asparagine 15 is a glycosylation site (N-linked (GlcNAc...) asparagine). Residues 22–26, lysine 47, and arginine 66 contribute to the substrate site; that span reads KPVNT.

This sequence belongs to the pancreatic ribonuclease family. Monomer. Interacts with and forms tight 1:1 complexes with RNH1. Dimerization of two such complexes may occur. Interaction with RNH1 inhibits this protein. In terms of tissue distribution, pancreas.

The protein localises to the secreted. The enzyme catalyses an [RNA] containing cytidine + H2O = an [RNA]-3'-cytidine-3'-phosphate + a 5'-hydroxy-ribonucleotide-3'-[RNA].. It carries out the reaction an [RNA] containing uridine + H2O = an [RNA]-3'-uridine-3'-phosphate + a 5'-hydroxy-ribonucleotide-3'-[RNA].. Its function is as follows. Endonuclease that catalyzes the cleavage of RNA on the 3' side of pyrimidine nucleotides. Acts on single-stranded and double-stranded RNA. The chain is Ribonuclease pancreatic (rnase1) from Oryx leucoryx (Arabian oryx).